We begin with the raw amino-acid sequence, 277 residues long: 3-methyl-2-oxobutanoate hydroxymethyltransferase (277 aa).

Residues aspartate 54 and aspartate 93 each contribute to the Mg(2+) site. Residues 54 to 55 (DS), aspartate 93, and lysine 122 contribute to the 3-methyl-2-oxobutanoate site. Mg(2+) is bound at residue glutamate 124. Glutamate 191 serves as the catalytic Proton acceptor.

Belongs to the PanB family. In terms of assembly, homodecamer; pentamer of dimers. It depends on Mg(2+) as a cofactor.

The protein resides in the cytoplasm. It carries out the reaction 3-methyl-2-oxobutanoate + (6R)-5,10-methylene-5,6,7,8-tetrahydrofolate + H2O = 2-dehydropantoate + (6S)-5,6,7,8-tetrahydrofolate. It participates in cofactor biosynthesis; (R)-pantothenate biosynthesis; (R)-pantoate from 3-methyl-2-oxobutanoate: step 1/2. Functionally, catalyzes the reversible reaction in which hydroxymethyl group from 5,10-methylenetetrahydrofolate is transferred onto alpha-ketoisovalerate to form ketopantoate. The sequence is that of 3-methyl-2-oxobutanoate hydroxymethyltransferase from Alkalilimnicola ehrlichii (strain ATCC BAA-1101 / DSM 17681 / MLHE-1).